A 38-amino-acid chain; its full sequence is Photosystem II reaction center protein X (38 aa).

The chain crosses the membrane as a helical span at residues 9–29 (IASLFAGAFIALAIGGVLVFI).

This sequence belongs to the PsbX family. Type 1 subfamily. In terms of assembly, PSII is composed of 1 copy each of membrane proteins PsbA, PsbB, PsbC, PsbD, PsbE, PsbF, PsbH, PsbI, PsbJ, PsbK, PsbL, PsbM, PsbT, PsbX, PsbY, PsbZ, Psb30/Ycf12, at least 3 peripheral proteins of the oxygen-evolving complex and a large number of cofactors. It forms dimeric complexes.

It localises to the plastid. The protein localises to the chloroplast thylakoid membrane. In terms of biological role, involved in the binding and/or turnover of quinones at the Q(B) site of photosystem II (PSII). PSII is a light-driven water plastoquinone oxidoreductase, using light energy to abstract electrons from H(2)O, generating a proton gradient subsequently used for ATP formation. This chain is Photosystem II reaction center protein X, found in Phaeodactylum tricornutum (strain CCAP 1055/1).